The chain runs to 903 residues: Valine--tRNA ligase (903 aa).

Positions 1–15 (MVCVTDQNNENPSQN) are enriched in polar residues. Residues 1-22 (MVCVTDQNNENPSQNRADKLPK) are disordered. Positions 61-71 (PNVTGQLHMGH) match the 'HIGH' region motif. The short motif at 552–556 (KMSKS) is the 'KMSKS' region element. K555 serves as a coordination point for ATP. The stretch at 836-902 (TVDVAAERKR…ERITKRLEEL (67 aa)) forms a coiled coil.

The protein belongs to the class-I aminoacyl-tRNA synthetase family. ValS type 1 subfamily. In terms of assembly, monomer.

The protein localises to the cytoplasm. It catalyses the reaction tRNA(Val) + L-valine + ATP = L-valyl-tRNA(Val) + AMP + diphosphate. Catalyzes the attachment of valine to tRNA(Val). As ValRS can inadvertently accommodate and process structurally similar amino acids such as threonine, to avoid such errors, it has a 'posttransfer' editing activity that hydrolyzes mischarged Thr-tRNA(Val) in a tRNA-dependent manner. The sequence is that of Valine--tRNA ligase from Corynebacterium efficiens (strain DSM 44549 / YS-314 / AJ 12310 / JCM 11189 / NBRC 100395).